The chain runs to 122 residues: Large ribosomal subunit protein uL14 (122 aa).

It belongs to the universal ribosomal protein uL14 family. Part of the 50S ribosomal subunit. Forms a cluster with proteins L3 and L19. In the 70S ribosome, L14 and L19 interact and together make contacts with the 16S rRNA in bridges B5 and B8.

In terms of biological role, binds to 23S rRNA. Forms part of two intersubunit bridges in the 70S ribosome. This is Large ribosomal subunit protein uL14 from Shewanella halifaxensis (strain HAW-EB4).